The primary structure comprises 221 residues: UPF0502 protein Sputcn32_1644 (221 aa).

Belongs to the UPF0502 family.

The sequence is that of UPF0502 protein Sputcn32_1644 from Shewanella putrefaciens (strain CN-32 / ATCC BAA-453).